Here is a 280-residue protein sequence, read N- to C-terminus: DegV domain-containing protein M6_Spy1440 (280 aa).

Residues 3–280 (WKIVTDSGCD…DGGLLMGYEI (278 aa)) form the DegV domain. Residues S63 and S91 each coordinate hexadecanoate.

Its function is as follows. May bind long-chain fatty acids, such as palmitate, and may play a role in lipid transport or fatty acid metabolism. This chain is DegV domain-containing protein M6_Spy1440, found in Streptococcus pyogenes serotype M6 (strain ATCC BAA-946 / MGAS10394).